We begin with the raw amino-acid sequence, 713 residues long: Polyribonucleotide nucleotidyltransferase (713 aa).

Residues Asp-485 and Asp-491 each coordinate Mg(2+). One can recognise a KH domain in the interval 552-611 (PRIHTIKINPEKIKDVIGKGGSVIRALTEETGTNIELDDDGTVRISAVANEAAMEAIRRI). In terms of domain architecture, S1 motif spans 621-689 (NRIYEGKVVR…RQGRVRLSIK (69 aa)).

It belongs to the polyribonucleotide nucleotidyltransferase family. As to quaternary structure, component of the RNA degradosome, which is a multiprotein complex involved in RNA processing and mRNA degradation. Mg(2+) is required as a cofactor.

It localises to the cytoplasm. It catalyses the reaction RNA(n+1) + phosphate = RNA(n) + a ribonucleoside 5'-diphosphate. In terms of biological role, involved in mRNA degradation. Catalyzes the phosphorolysis of single-stranded polyribonucleotides processively in the 3'- to 5'-direction. The polypeptide is Polyribonucleotide nucleotidyltransferase (Aeromonas salmonicida (strain A449)).